We begin with the raw amino-acid sequence, 221 residues long: Stromal cell-derived factor 2-like protein 1 (221 aa).

A signal peptide spans 1-28 (MWGASRGRVAGPTLLGLLLALSVRSGGA). 3 MIR domains span residues 33–87 (AGLV…IRGG), 95–150 (GLPV…VRCS), and 151–205 (GQHW…AMEG). At S215 the chain carries Phosphoserine. Residues 218–221 (HDEL) carry the Prevents secretion from ER motif.

Ubiquitously expressed with high expression in the testis, ovary, uterus, and low expression in heart and skeletal muscle.

The protein localises to the endoplasmic reticulum lumen. The protein is Stromal cell-derived factor 2-like protein 1 (Sdf2l1) of Mus musculus (Mouse).